We begin with the raw amino-acid sequence, 212 residues long: MANSGVQLLGFGLSLIGIIGLIVGTILPQWKMSAYVGDSIITAVATYQGLWMSCAFQSTGQLQCKIYDSILQLDSDLQATRALMIVGIIVSIAGLGVASIGMKCTTCGADDKVRKTRTAMTGGIILLVGALCAVVACSWFAHNVIRAFYNPFTPVNTKFEFGAAIFIAWGGSFLDVLGGAMLAASCPRSKQVSKYPKSNSTRSANGSNKEYV.

The Cytoplasmic portion of the chain corresponds to 1 to 7 (MANSGVQ). A helical transmembrane segment spans residues 8–28 (LLGFGLSLIGIIGLIVGTILP). Topologically, residues 29 to 81 (QWKMSAYVGDSIITAVATYQGLWMSCAFQSTGQLQCKIYDSILQLDSDLQATR) are extracellular. Residues 82-102 (ALMIVGIIVSIAGLGVASIGM) traverse the membrane as a helical segment. Over 103-119 (KCTTCGADDKVRKTRTA) the chain is Cytoplasmic. Residues 120–140 (MTGGIILLVGALCAVVACSWF) form a helical membrane-spanning segment. Residues 141-162 (AHNVIRAFYNPFTPVNTKFEFG) lie on the Extracellular side of the membrane. A helical transmembrane segment spans residues 163–183 (AAIFIAWGGSFLDVLGGAMLA). Residues 184–212 (ASCPRSKQVSKYPKSNSTRSANGSNKEYV) lie on the Cytoplasmic side of the membrane. The disordered stretch occupies residues 191–212 (QVSKYPKSNSTRSANGSNKEYV).

This sequence belongs to the claudin family.

It localises to the cell junction. Its subcellular location is the tight junction. The protein localises to the cell membrane. Plays a major role in tight junction-specific obliteration of the intercellular space. The sequence is that of Claudin-7-A from Danio rerio (Zebrafish).